The chain runs to 154 residues: Ubiquitin-like protein 4A-A (154 aa).

A Ubiquitin-like domain is found at 1 to 76 (MILTVKPLQG…LNLVVRPAGE (76 aa)).

Component of the BAT3 complex.

The protein resides in the cytoplasm. The protein localises to the cytosol. Component of the BAT3 complex, a multiprotein complex involved in the post-translational delivery of tail-anchored (TA) membrane proteins to the endoplasmic reticulum membrane. TA membrane proteins, also named type II transmembrane proteins, contain a single C-terminal transmembrane region. The polypeptide is Ubiquitin-like protein 4A-A (ubl4aa) (Oncorhynchus mykiss (Rainbow trout)).